Consider the following 367-residue polypeptide: Phosphoribosylaminoimidazole-succinocarboxamide synthase (367 aa).

The protein belongs to the SAICAR synthetase family.

It carries out the reaction 5-amino-1-(5-phospho-D-ribosyl)imidazole-4-carboxylate + L-aspartate + ATP = (2S)-2-[5-amino-1-(5-phospho-beta-D-ribosyl)imidazole-4-carboxamido]succinate + ADP + phosphate + 2 H(+). The protein operates within purine metabolism; IMP biosynthesis via de novo pathway; 5-amino-1-(5-phospho-D-ribosyl)imidazole-4-carboxamide from 5-amino-1-(5-phospho-D-ribosyl)imidazole-4-carboxylate: step 1/2. This is Phosphoribosylaminoimidazole-succinocarboxamide synthase from Saccharophagus degradans (strain 2-40 / ATCC 43961 / DSM 17024).